Here is a 268-residue protein sequence, read N- to C-terminus: TATA-box-binding protein (268 aa).

A compositionally biased stretch (polar residues) spans 1 to 24 (MDSLTTHPATAQQARAFTSPSSLS). The segment at 1–86 (MDSLTTHPAT…TPAATPGASA (86 aa)) is disordered. Residues 50 to 86 (NGQSANGNVNGQQQGANAANGNGVMPATPAATPGASA) show a composition bias toward low complexity. A run of 2 repeats spans residues 95-171 (LQNI…ARII) and 185-262 (IQNI…YPVL).

The protein belongs to the TBP family. As to quaternary structure, belongs to the TFIID complex together with the TBP-associated factors (TAFs). Binds DNA as monomer.

The protein localises to the nucleus. Functionally, general transcription factor that functions at the core of the DNA-binding multiprotein factor TFIID. Binding of TFIID to the TATA box is the initial transcriptional step of the pre-initiation complex (PIC), playing a role in the activation of eukaryotic genes transcribed by RNA polymerase II. In Emericella nidulans (strain FGSC A4 / ATCC 38163 / CBS 112.46 / NRRL 194 / M139) (Aspergillus nidulans), this protein is TATA-box-binding protein (tbpA).